Here is a 368-residue protein sequence, read N- to C-terminus: 3-dehydroquinate synthase (368 aa).

Residues 69-74, 103-107, 127-128, lysine 140, and lysine 149 contribute to the NAD(+) site; these read DGEAYK, GVIGD, and TT. Zn(2+) contacts are provided by glutamate 182, histidine 245, and histidine 262.

It belongs to the sugar phosphate cyclases superfamily. Dehydroquinate synthase family. The cofactor is NAD(+). Co(2+) is required as a cofactor. Requires Zn(2+) as cofactor.

The protein localises to the cytoplasm. The enzyme catalyses 7-phospho-2-dehydro-3-deoxy-D-arabino-heptonate = 3-dehydroquinate + phosphate. It participates in metabolic intermediate biosynthesis; chorismate biosynthesis; chorismate from D-erythrose 4-phosphate and phosphoenolpyruvate: step 2/7. In terms of biological role, catalyzes the conversion of 3-deoxy-D-arabino-heptulosonate 7-phosphate (DAHP) to dehydroquinate (DHQ). This Pseudomonas aeruginosa (strain ATCC 15692 / DSM 22644 / CIP 104116 / JCM 14847 / LMG 12228 / 1C / PRS 101 / PAO1) protein is 3-dehydroquinate synthase.